Reading from the N-terminus, the 248-residue chain is Probable transcriptional regulatory protein P9303_05381 (248 aa).

It belongs to the TACO1 family.

Its subcellular location is the cytoplasm. In Prochlorococcus marinus (strain MIT 9303), this protein is Probable transcriptional regulatory protein P9303_05381.